A 338-amino-acid polypeptide reads, in one-letter code: Holliday junction branch migration complex subunit RuvB (338 aa).

The segment at 4–186 (ADRLIAPDNP…FGITQRLEYY (183 aa)) is large ATPase domain (RuvB-L). Residues isoleucine 25, arginine 26, glycine 67, lysine 70, threonine 71, threonine 72, 133 to 135 (EDY), arginine 176, tyrosine 186, and arginine 223 each bind ATP. A Mg(2+)-binding site is contributed by threonine 71. The small ATPAse domain (RuvB-S) stretch occupies residues 187–257 (KVEDLQNIVQ…VADKALNMLD (71 aa)). The interval 260–338 (AKGFDYMDRK…HFGIDKPSNR (79 aa)) is head domain (RuvB-H). DNA-binding residues include arginine 296, arginine 315, and arginine 320.

Belongs to the RuvB family. In terms of assembly, homohexamer. Forms an RuvA(8)-RuvB(12)-Holliday junction (HJ) complex. HJ DNA is sandwiched between 2 RuvA tetramers; dsDNA enters through RuvA and exits via RuvB. An RuvB hexamer assembles on each DNA strand where it exits the tetramer. Each RuvB hexamer is contacted by two RuvA subunits (via domain III) on 2 adjacent RuvB subunits; this complex drives branch migration. In the full resolvosome a probable DNA-RuvA(4)-RuvB(12)-RuvC(2) complex forms which resolves the HJ.

It is found in the cytoplasm. It catalyses the reaction ATP + H2O = ADP + phosphate + H(+). In terms of biological role, the RuvA-RuvB-RuvC complex processes Holliday junction (HJ) DNA during genetic recombination and DNA repair, while the RuvA-RuvB complex plays an important role in the rescue of blocked DNA replication forks via replication fork reversal (RFR). RuvA specifically binds to HJ cruciform DNA, conferring on it an open structure. The RuvB hexamer acts as an ATP-dependent pump, pulling dsDNA into and through the RuvAB complex. RuvB forms 2 homohexamers on either side of HJ DNA bound by 1 or 2 RuvA tetramers; 4 subunits per hexamer contact DNA at a time. Coordinated motions by a converter formed by DNA-disengaged RuvB subunits stimulates ATP hydrolysis and nucleotide exchange. Immobilization of the converter enables RuvB to convert the ATP-contained energy into a lever motion, pulling 2 nucleotides of DNA out of the RuvA tetramer per ATP hydrolyzed, thus driving DNA branch migration. The RuvB motors rotate together with the DNA substrate, which together with the progressing nucleotide cycle form the mechanistic basis for DNA recombination by continuous HJ branch migration. Branch migration allows RuvC to scan DNA until it finds its consensus sequence, where it cleaves and resolves cruciform DNA. The polypeptide is Holliday junction branch migration complex subunit RuvB (Vibrio atlanticus (strain LGP32) (Vibrio splendidus (strain Mel32))).